Reading from the N-terminus, the 363-residue chain is Mitogen-activated protein kinase 13 (363 aa).

One can recognise a Protein kinase domain in the interval 33–319 (IPPIEPIGRG…VDEALKQPYL (287 aa)). ATP is bound by residues 39 to 47 (IGRGAYGIV) and lysine 62. Aspartate 159 (proton acceptor) is an active-site residue. Threonine 191 carries the phosphothreonine modification. A TXY motif is present at residues 191–193 (TEY). Tyrosine 193 carries the phosphotyrosine modification. Threonine 196 bears the Phosphothreonine mark.

Belongs to the protein kinase superfamily. CMGC Ser/Thr protein kinase family. MAP kinase subfamily. In terms of assembly, interacts with MKK6. Post-translationally, dually phosphorylated on Thr-191 and Tyr-193, which activates the enzyme. In terms of tissue distribution, expressed in roots, stems and flower buds.

The enzyme catalyses L-seryl-[protein] + ATP = O-phospho-L-seryl-[protein] + ADP + H(+). It carries out the reaction L-threonyl-[protein] + ATP = O-phospho-L-threonyl-[protein] + ADP + H(+). Activated by threonine and tyrosine phosphorylation. Activated by the MAP kinase kinase MKK6 in vitro. MKK6-MPK13 module positively regulates lateral root formation. This chain is Mitogen-activated protein kinase 13 (MPK13), found in Arabidopsis thaliana (Mouse-ear cress).